A 1455-amino-acid polypeptide reads, in one-letter code: DNA-directed RNA polymerase subunit beta (1455 aa).

Belongs to the RNA polymerase beta chain family. As to quaternary structure, the RNAP catalytic core consists of 2 alpha, 1 beta, 1 beta' and 1 omega subunit. When a sigma factor is associated with the core the holoenzyme is formed, which can initiate transcription.

It carries out the reaction RNA(n) + a ribonucleoside 5'-triphosphate = RNA(n+1) + diphosphate. DNA-dependent RNA polymerase catalyzes the transcription of DNA into RNA using the four ribonucleoside triphosphates as substrates. This is DNA-directed RNA polymerase subunit beta from Rhizorhabdus wittichii (strain DSM 6014 / CCUG 31198 / JCM 15750 / NBRC 105917 / EY 4224 / RW1) (Sphingomonas wittichii).